Here is a 187-residue protein sequence, read N- to C-terminus: Elongation factor P (187 aa).

It belongs to the elongation factor P family.

The protein localises to the cytoplasm. It functions in the pathway protein biosynthesis; polypeptide chain elongation. Involved in peptide bond synthesis. Stimulates efficient translation and peptide-bond synthesis on native or reconstituted 70S ribosomes in vitro. Probably functions indirectly by altering the affinity of the ribosome for aminoacyl-tRNA, thus increasing their reactivity as acceptors for peptidyl transferase. The polypeptide is Elongation factor P (Bifidobacterium animalis subsp. lactis (strain AD011)).